We begin with the raw amino-acid sequence, 285 residues long: Cell division protein DivIB (285 aa).

Basic and acidic residues predominate over residues 1 to 19 (MNEKNKNDESKHQEDKLQD). Residues 1–20 (MNEKNKNDESKHQEDKLQDQ) form a disordered region. Residues 1–66 (MNEKNKNDES…NRFNAMERNS (66 aa)) lie on the Cytoplasmic side of the membrane. The chain crosses the membrane as a helical span at residues 67–87 (IHMIVILSIISLLLILLLSPL). A POTRA domain is found at 88-158 (MRFQKVEITG…QVAQIKIEEN (71 aa)). At 88–285 (MRFQKVEITG…FQVGTYFQQY (198 aa)) the chain is on the extracellular side.

The protein belongs to the FtsQ/DivIB family. DivIB subfamily.

It is found in the cell membrane. In terms of biological role, cell division protein that may be involved in stabilizing or promoting the assembly of the division complex. This is Cell division protein DivIB from Weissella koreensis (strain KACC 15510).